A 215-amino-acid polypeptide reads, in one-letter code: MNKDQSKIPQATAKRLPLYYRFLKNLHASGKQRVSSAELSDAVKVDSATIRRDFSYFGALGKKGYGYNVDYLLSFFRKTLDQDEMTDVILIGVGNLGTAFLHYNFTKNNNTKISMAFDINESKIGTEVGGVPVYNLDDLEQHVKDESVAILTVPAVAAQSITDRLVALGIKGILNFTPARLNVPEHIRIHHIDLAVELQSLVYFLKHYSVLEEIE.

Positions 18-57 (LYYRFLKNLHASGKQRVSSAELSDAVKVDSATIRRDFSYF) form a DNA-binding region, H-T-H motif. 92–97 (GVGNLG) is an NAD(+) binding site.

Belongs to the transcriptional regulatory Rex family. In terms of assembly, homodimer.

The protein localises to the cytoplasm. Functionally, modulates transcription in response to changes in cellular NADH/NAD(+) redox state. This is Redox-sensing transcriptional repressor Rex from Bacillus subtilis (strain 168).